A 460-amino-acid chain; its full sequence is Elongation factor 1-alpha-B (460 aa).

Glycine 2 carries the n,N,N-trimethylglycine modification. Lysine 3 bears the N6,N6-dimethyllysine; alternate mark. Lysine 3 carries the post-translational modification N6-methyllysine; alternate. Residues 5–240 (KGHINVVVIG…DSIEPPARPT (236 aa)) enclose the tr-type G domain. The interval 14 to 21 (GHVDSGKS) is G1. Position 14–21 (14–21 (GHVDSGKS)) interacts with GTP. Position 30 is an N6-methyllysine (lysine 30). The tract at residues 70-74 (GITID) is G2. Position 79 is an N6,N6,N6-trimethyllysine (lysine 79). Residues 91 to 94 (DAPG) form a G3 region. GTP contacts are provided by residues 91 to 95 (DAPGH) and 153 to 156 (NKMD). The segment at 153–156 (NKMD) is G4. The tract at residues 192–194 (SGF) is G5. The residue at position 316 (lysine 316) is an N6,N6-dimethyllysine; alternate. Lysine 316 is subject to N6-methyllysine; alternate. Lysine 390 carries the N6-methyllysine modification.

It belongs to the TRAFAC class translation factor GTPase superfamily. Classic translation factor GTPase family. EF-Tu/EF-1A subfamily.

The protein resides in the cytoplasm. This protein promotes the GTP-dependent binding of aminoacyl-tRNA to the A-site of ribosomes during protein biosynthesis. In Schizosaccharomyces pombe (strain 972 / ATCC 24843) (Fission yeast), this protein is Elongation factor 1-alpha-B (tef102).